The primary structure comprises 397 residues: MNYAYPDEKGHYGIYGGRYVPETLMQSVLELEEAYKEAMQDEAFQKELNHYLKTYVGRETPLYFAENMTKYCGGAKIYLKREDLNHTGAHKINNTIGQALLAVRMGKKKVVAETGAGQHGVATATVCALLGLECVIFMGEEDVRRQKLNVFRMELLGAKVESVAAGSGTLKDAVNEALRYWVSHVHDTHYIMGSVLGPHPFPQIVRDFQSVIGNETKKQYEALEGKLPEAVVACIGGGSNAMGMFYPFVHDEEVALYGVEAAGKGVHTEKHAATLTKGSVGVLHGSMMYLLQNEEGQIQEAHSISAGLDYPGVGPEHSLLKDIGRVSYHSITDDEALEAFQLLTKKEGIIPALESSHAVAYALKLAPKMKKDEGLVICLSGRGDKDVESIKRYMEEV.

Lys91 carries the N6-(pyridoxal phosphate)lysine modification.

The protein belongs to the TrpB family. Tetramer of two alpha and two beta chains. It depends on pyridoxal 5'-phosphate as a cofactor.

It carries out the reaction (1S,2R)-1-C-(indol-3-yl)glycerol 3-phosphate + L-serine = D-glyceraldehyde 3-phosphate + L-tryptophan + H2O. It participates in amino-acid biosynthesis; L-tryptophan biosynthesis; L-tryptophan from chorismate: step 5/5. Its function is as follows. The beta subunit is responsible for the synthesis of L-tryptophan from indole and L-serine. The chain is Tryptophan synthase beta chain from Bacillus cereus (strain G9842).